Consider the following 86-residue polypeptide: MSVTPSPIETNAPKPLKKGSLVRVNPEAYKNSLESLASDQSSPEYIFEGPGELVAIKQDYGQVRWRRPVPDVWLRLDQLQAWTEGS.

This sequence belongs to the complex I NdhO subunit family. NDH-1 can be composed of about 15 different subunits; different subcomplexes with different compositions have been identified which probably have different functions.

The protein resides in the cellular thylakoid membrane. The enzyme catalyses a plastoquinone + NADH + (n+1) H(+)(in) = a plastoquinol + NAD(+) + n H(+)(out). The catalysed reaction is a plastoquinone + NADPH + (n+1) H(+)(in) = a plastoquinol + NADP(+) + n H(+)(out). In terms of biological role, NDH-1 shuttles electrons from an unknown electron donor, via FMN and iron-sulfur (Fe-S) centers, to quinones in the respiratory and/or the photosynthetic chain. The immediate electron acceptor for the enzyme in this species is believed to be plastoquinone. Couples the redox reaction to proton translocation, and thus conserves the redox energy in a proton gradient. Cyanobacterial NDH-1 also plays a role in inorganic carbon-concentration. This Prochlorococcus marinus (strain SARG / CCMP1375 / SS120) protein is NAD(P)H-quinone oxidoreductase subunit O.